A 426-amino-acid chain; its full sequence is Histidine--tRNA ligase (426 aa).

The protein belongs to the class-II aminoacyl-tRNA synthetase family. As to quaternary structure, homodimer.

The protein localises to the cytoplasm. It carries out the reaction tRNA(His) + L-histidine + ATP = L-histidyl-tRNA(His) + AMP + diphosphate + H(+). This chain is Histidine--tRNA ligase, found in Streptococcus agalactiae serotype Ia (strain ATCC 27591 / A909 / CDC SS700).